The sequence spans 590 residues: DNA primase (590 aa).

The segment at 37–61 (CPFHTEKTPSFIVNPAGAHYHCFGC) adopts a CHC2-type zinc-finger fold. Residues 253–333 (KKVILVEGQA…QMSVFVCKLP (81 aa)) form the Toprim domain. Mg(2+) contacts are provided by Glu259, Asp304, and Asp306.

This sequence belongs to the DnaG primase family. As to quaternary structure, monomer. Interacts with DnaB. Requires Zn(2+) as cofactor. The cofactor is Mg(2+).

The enzyme catalyses ssDNA + n NTP = ssDNA/pppN(pN)n-1 hybrid + (n-1) diphosphate.. In terms of biological role, RNA polymerase that catalyzes the synthesis of short RNA molecules used as primers for DNA polymerase during DNA replication. This is DNA primase from Chlamydia pneumoniae (Chlamydophila pneumoniae).